A 464-amino-acid polypeptide reads, in one-letter code: RYamide receptor (464 aa).

At 1–105 (MEHHNSHLLP…EDMWSSAYFK (105 aa)) the chain is on the extracellular side. Residues Asn49, Asn79, and Asn85 are each glycosylated (N-linked (GlcNAc...) asparagine). A helical membrane pass occupies residues 106–126 (IIVYMLYIPIFIFALIGNGTV). Residues 127-148 (CYIVYSTPRMRTVTNYFIASLA) are Cytoplasmic-facing. The helical transmembrane segment at 149–169 (IGDILMSFFCVPSSFISLFIL) threads the bilayer. The Extracellular segment spans residues 170 to 189 (NYWPFGLALCHFVNYSQAVS). N-linked (GlcNAc...) asparagine glycosylation occurs at Asn183. The chain crosses the membrane as a helical span at residues 190–210 (VLVSAYTLVAISIDRYIAIMW). Residues 211–221 (PLKPRITKRYA) lie on the Cytoplasmic side of the membrane. Residues 222–242 (TFIIAGVWFIALATALPIPIV) form a helical membrane-spanning segment. Residues 243-274 (SGLDIPMSPWHTKCEKYICREMWPSRTQEYYY) are Extracellular-facing. The helical transmembrane segment at 275 to 295 (TLSLFALQFVVPLGVLIFTYA) threads the bilayer. Residues 296 to 329 (RITIRVWAKRPPGEAETNRDQRMARSKRKMVKMM) are Cytoplasmic-facing. Residues 330 to 350 (LTVVIVFTCCWLPFNILQLLL) form a helical membrane-spanning segment. Over 351-363 (NDEEFAHWDPLPY) the chain is Extracellular. The chain crosses the membrane as a helical span at residues 364–384 (VWFAFHWLAMSHCCYNPIIYC). At 385-464 (YMNARFRSGF…LSCGETSPLR (80 aa)) the chain is on the cytoplasmic side.

This sequence belongs to the G-protein coupled receptor 1 family.

Its subcellular location is the cell membrane. Its function is as follows. Receptor for the neuropeptides RYamide-1 and RYamide-2. The activity of this receptor is mediated by G proteins which activate a phosphatidyl-inositol-calcium second messenger system. RYamide signaling may suppress feeding behavior. The polypeptide is RYamide receptor (Drosophila melanogaster (Fruit fly)).